The primary structure comprises 128 residues: Large ribosomal subunit protein eL31 (128 aa).

Belongs to the eukaryotic ribosomal protein eL31 family.

The protein is Large ribosomal subunit protein eL31 (RpL31) of Drosophila virilis (Fruit fly).